The sequence spans 126 residues: Large ribosomal subunit protein bL12 (126 aa).

It belongs to the bacterial ribosomal protein bL12 family. Homodimer. Part of the ribosomal stalk of the 50S ribosomal subunit. Forms a multimeric L10(L12)X complex, where L10 forms an elongated spine to which 2 to 4 L12 dimers bind in a sequential fashion. Binds GTP-bound translation factors.

In terms of biological role, forms part of the ribosomal stalk which helps the ribosome interact with GTP-bound translation factors. Is thus essential for accurate translation. This Nocardia farcinica (strain IFM 10152) protein is Large ribosomal subunit protein bL12.